Here is a 98-residue protein sequence, read N- to C-terminus: Citrate lyase acyl carrier protein (98 aa).

Ser14 carries the post-translational modification O-(phosphoribosyl dephospho-coenzyme A)serine.

The protein belongs to the CitD family. As to quaternary structure, oligomer with a subunit composition of (alpha,beta,gamma)6.

The protein resides in the cytoplasm. Functionally, covalent carrier of the coenzyme of citrate lyase. This is Citrate lyase acyl carrier protein from Escherichia coli O127:H6 (strain E2348/69 / EPEC).